The chain runs to 1131 residues: Phytochrome B1 (1131 aa).

Residues 1-11 (MASGSRTKHSY) show a composition bias toward basic residues. Residues 1–26 (MASGSRTKHSYHNSSQGQAQSSGTSN) form a disordered region. The span at 14–25 (SSQGQAQSSGTS) shows a compositional bias: low complexity. The GAF domain occupies 229 to 408 (DIKLLCDTVV…AFGLQLNMEL (180 aa)). Residue Cys-334 participates in phytochromobilin binding. 2 consecutive PAS domains span residues 622-693 (VARE…LRGV) and 756-808 (DYKA…GEIF). One can recognise a Histidine kinase domain in the interval 904–1124 (YICQEVKSPL…MIILDLPMTR (221 aa)).

It belongs to the phytochrome family. Homodimer. Post-translationally, contains one covalently linked phytochromobilin chromophore.

Regulatory photoreceptor which exists in two forms that are reversibly interconvertible by light: the Pr form that absorbs maximally in the red region of the spectrum and the Pfr form that absorbs maximally in the far-red region. Photoconversion of Pr to Pfr induces an array of morphogenic responses, whereas reconversion of Pfr to Pr cancels the induction of those responses. Pfr controls the expression of a number of nuclear genes including those encoding the small subunit of ribulose-bisphosphate carboxylase, chlorophyll A/B binding protein, protochlorophyllide reductase, rRNA, etc. It also controls the expression of its own gene(s) in a negative feedback fashion. The polypeptide is Phytochrome B1 (Solanum lycopersicum (Tomato)).